Reading from the N-terminus, the 217-residue chain is uncharacterized protein (217 aa).

A signal peptide spans 1–32 (MPITKATPLFLRYRLKGFVFLTLLLVQGVFTA). C33 carries the N-palmitoyl cysteine lipid modification. A lipid anchor (S-diacylglycerol cysteine) is attached at C33.

Belongs to the MG067/MG068/MG395 family.

The protein localises to the cell membrane. This is an uncharacterized protein from Mycoplasma pneumoniae (strain ATCC 29342 / M129 / Subtype 1) (Mycoplasmoides pneumoniae).